A 359-amino-acid chain; its full sequence is Protein Wnt-2 (359 aa).

The N-terminal stretch at 1–25 is a signal peptide; sequence MNAPLAGIWPWLPLLWAWLVPEVSS. 11 cysteine pairs are disulfide-bonded: cysteine 75–cysteine 86, cysteine 126–cysteine 134, cysteine 136–cysteine 156, cysteine 205–cysteine 219, cysteine 207–cysteine 214, cysteine 277–cysteine 308, cysteine 293–cysteine 303, cysteine 307–cysteine 347, cysteine 323–cysteine 338, cysteine 325–cysteine 335, and cysteine 330–cysteine 331. Serine 211 is lipidated: O-palmitoleoyl serine; by PORCN. The N-linked (GlcNAc...) asparagine glycan is linked to asparagine 294.

It belongs to the Wnt family. In terms of processing, palmitoleoylation is required for efficient binding to frizzled receptors. Depalmitoleoylation leads to Wnt signaling pathway inhibition.

Its subcellular location is the secreted. The protein localises to the extracellular space. It is found in the extracellular matrix. In terms of biological role, ligand for members of the frizzled family of seven transmembrane receptors. Probable developmental protein. May be a signaling molecule which affects the development of discrete regions of tissues. Is likely to signal over only few cell diameters. The chain is Protein Wnt-2 (WNT2) from Echinops telfairi (Lesser hedgehog tenrec).